The following is a 333-amino-acid chain: tRNA-dihydrouridine(16) synthase (333 aa).

FMN contacts are provided by residues 19–21 and Gln-80; that span reads PMQ. The active-site Proton donor is the Cys-110. Residues Lys-151, 211 to 213, and 235 to 236 each bind FMN; these read NGD and GR.

It belongs to the Dus family. DusC subfamily. Requires FMN as cofactor.

The catalysed reaction is 5,6-dihydrouridine(16) in tRNA + NADP(+) = uridine(16) in tRNA + NADPH + H(+). It carries out the reaction 5,6-dihydrouridine(16) in tRNA + NAD(+) = uridine(16) in tRNA + NADH + H(+). In terms of biological role, catalyzes the synthesis of 5,6-dihydrouridine (D), a modified base found in the D-loop of most tRNAs, via the reduction of the C5-C6 double bond in target uridines. Specifically modifies U16 in tRNAs. This Neisseria meningitidis serogroup A / serotype 4A (strain DSM 15465 / Z2491) protein is tRNA-dihydrouridine(16) synthase.